A 156-amino-acid chain; its full sequence is Small ribosomal subunit protein uS7 (156 aa).

This sequence belongs to the universal ribosomal protein uS7 family. Part of the 30S ribosomal subunit. Contacts proteins S9 and S11.

In terms of biological role, one of the primary rRNA binding proteins, it binds directly to 16S rRNA where it nucleates assembly of the head domain of the 30S subunit. Is located at the subunit interface close to the decoding center, probably blocks exit of the E-site tRNA. This Staphylococcus aureus (strain USA300) protein is Small ribosomal subunit protein uS7.